Consider the following 125-residue polypeptide: Prefoldin subunit beta (125 aa).

Belongs to the prefoldin subunit beta family. Heterohexamer of two alpha and four beta subunits.

The protein localises to the cytoplasm. Molecular chaperone capable of stabilizing a range of proteins. Seems to fulfill an ATP-independent, HSP70-like function in archaeal de novo protein folding. The chain is Prefoldin subunit beta from Pyrobaculum calidifontis (strain DSM 21063 / JCM 11548 / VA1).